A 404-amino-acid polypeptide reads, in one-letter code: Dihydroorotase (404 aa).

Residues His57 and His59 each contribute to the Zn(2+) site. Substrate contacts are provided by residues 59-61 (HLR) and Asn91. Positions 135, 164, 204, and 272 each coordinate Zn(2+). Lys135 bears the N6-carboxylysine mark. Asp272 is a catalytic residue. Substrate-binding positions include His276 and 286-287 (AG).

This sequence belongs to the metallo-dependent hydrolases superfamily. DHOase family. Class I DHOase subfamily. Zn(2+) is required as a cofactor.

It carries out the reaction (S)-dihydroorotate + H2O = N-carbamoyl-L-aspartate + H(+). It functions in the pathway pyrimidine metabolism; UMP biosynthesis via de novo pathway; (S)-dihydroorotate from bicarbonate: step 3/3. Catalyzes the reversible cyclization of carbamoyl aspartate to dihydroorotate. The polypeptide is Dihydroorotase (Pyrococcus abyssi (strain GE5 / Orsay)).